The following is a 907-amino-acid chain: Leucine-rich repeat-containing G-protein coupled receptor 5 (907 aa).

A signal peptide spans 1–21; sequence MDTSRVRMLLSLLALLQLVAA. At 22–561 the chain is on the extracellular side; the sequence is GSPPRPDTMP…EHLFGSWLIR (540 aa). The LRRNT domain maps to 33 to 64; it reads GCPSYCHCELDGRMLLRVDCSDLGLSELPSNL. Cystine bridges form between cysteine 34–cysteine 40 and cysteine 38–cysteine 52. LRR repeat units follow at residues 44–64, 65–88, 89–112, 114–136, 137–160, 162–184, 186–208, 209–232, 233–256, 257–279, 281–303, 304–327, 328–350, 351–375, 377–396, 397–420, and 422–444; these read GRML…PSNL, SVFT…LLHR, LRFL…AFAG, HSLK…ALQN, LRSL…CFSG, HSLR…AFRS, SALQ…AFGN, LSSL…CFDG, LHSL…IKTL, SNLK…AFVG, PSLI…AFQH, LPEL…LTGT, ATLE…VCDQ, LPNL…GCQK, QKID…TFQQ, LFNL…AFST, and PSLI…GLHG. Asparagine 63 and asparagine 77 each carry an N-linked (GlcNAc...) asparagine glycan. Residue asparagine 208 is glycosylated (N-linked (GlcNAc...) asparagine). A disulfide bridge connects residues cysteine 348 and cysteine 373. A disulfide bridge links cysteine 479 with cysteine 541. A helical transmembrane segment spans residues 562 to 582; the sequence is IGVWTTAVLALSCNALVAFTV. Residues 564–585 form an LRR 18 repeat; it reads VWTTAVLALSCNALVAFTVFRT. Topologically, residues 583–595 are cytoplasmic; that stretch reads FRTPLYISSIKLL. A helical transmembrane segment spans residues 596–616; it reads IGVIAVVDILMGVSSAILAVV. Residues 617–638 lie on the Extracellular side of the membrane; the sequence is DTFTFGSFAQHGAWWEGGIGCQ. A disulfide bridge links cysteine 637 with cysteine 712. Residues 639–659 traverse the membrane as a helical segment; that stretch reads IVGFLSIFASESSVFLLTLAA. Topologically, residues 660–682 are cytoplasmic; it reads LERGFSVKCSSKFEMKAPLSSLK. Residues 683–703 form a helical membrane-spanning segment; it reads AIILLCVLLALTIATVPLLGG. The Extracellular segment spans residues 704 to 723; the sequence is SEYNASPLCLPLPFGEPSTT. Residues 724–744 traverse the membrane as a helical segment; sequence GYMVALVLLNSLCFLIMTIAY. Topologically, residues 745 to 775 are cytoplasmic; that stretch reads TRLYCSLEKGELENLWDCSMVKHTALLLFTN. A helical transmembrane segment spans residues 776 to 796; the sequence is CILYCPVAFLSFSSLLNLTFI. At 797–802 the chain is on the extracellular side; the sequence is SPEVIK. A helical transmembrane segment spans residues 803–823; that stretch reads FILLVIVPLPACLNPLLYIVF. Residues 824-907 are Cytoplasmic-facing; that stretch reads NPHFKEDMGS…LSSVAFVPCL (84 aa).

It belongs to the G-protein coupled receptor 1 family. As to quaternary structure, identified in a complex composed of RNF43, LGR5 and RSPO1. Also interacts with other R-spondin ligands, including RSPO2, RSPO3 and RSPO4.

It localises to the cell membrane. The protein localises to the golgi apparatus. Its subcellular location is the trans-Golgi network membrane. Functionally, receptor for R-spondins that potentiates the canonical Wnt signaling pathway and acts as a stem cell marker of the intestinal epithelium and the hair follicle. Upon binding to R-spondins (RSPO1, RSPO2, RSPO3 or RSPO4), associates with phosphorylated LRP6 and frizzled receptors that are activated by extracellular Wnt receptors, triggering the canonical Wnt signaling pathway to increase expression of target genes. In contrast to classical G-protein coupled receptors, does not activate heterotrimeric G-proteins to transduce the signal. Involved in the development and/or maintenance of the adult intestinal stem cells during postembryonic development. The sequence is that of Leucine-rich repeat-containing G-protein coupled receptor 5 (Lgr5) from Rattus norvegicus (Rat).